The chain runs to 398 residues: Delta-aminolevulinic acid dehydratase, chloroplastic (398 aa).

The tract at residues 48–87 (VPEAPPVPPTPASPAGTPVVPSLPIQRRPRRNRRSPALRS) is disordered. The span at 50–59 (EAPPVPPTPA) shows a compositional bias: pro residues. A compositionally biased stretch (low complexity) spans 60-69 (SPAGTPVVPS). The segment covering 74-83 (RRPRRNRRSP) has biased composition (basic residues). The Schiff-base intermediate with substrate role is filled by Lys-266. 5-aminolevulinate-binding residues include Arg-276 and Lys-288. A Mg(2+)-binding site is contributed by Glu-304. The active-site Schiff-base intermediate with substrate is the Lys-319. Residues Ser-345 and Tyr-384 each coordinate 5-aminolevulinate.

It belongs to the ALAD family. In terms of assembly, homooctamer; formed by oligomerization of dimers. Probably also forms lower oligomers. It depends on Mg(2+) as a cofactor.

The protein resides in the plastid. Its subcellular location is the chloroplast. The catalysed reaction is 2 5-aminolevulinate = porphobilinogen + 2 H2O + H(+). Its pathway is porphyrin-containing compound metabolism; protoporphyrin-IX biosynthesis; coproporphyrinogen-III from 5-aminolevulinate: step 1/4. Activated by magnesium. Inhibited by succinyl acetone. Enzyme activity may depend on the oligomerization state, where the fully active octamer may dissociate and reassemble into less active lower oligomers. Its function is as follows. Catalyzes an early step in the biosynthesis of tetrapyrroles. Binds two molecules of 5-aminolevulinate per subunit, each at a distinct site, and catalyzes their condensation to form porphobilinogen. This Pisum sativum (Garden pea) protein is Delta-aminolevulinic acid dehydratase, chloroplastic (HEMB).